Reading from the N-terminus, the 453-residue chain is Exodeoxyribonuclease 7 large subunit (453 aa).

It belongs to the XseA family. Heterooligomer composed of large and small subunits.

It is found in the cytoplasm. The enzyme catalyses Exonucleolytic cleavage in either 5'- to 3'- or 3'- to 5'-direction to yield nucleoside 5'-phosphates.. Functionally, bidirectionally degrades single-stranded DNA into large acid-insoluble oligonucleotides, which are then degraded further into small acid-soluble oligonucleotides. The chain is Exodeoxyribonuclease 7 large subunit from Rickettsia typhi (strain ATCC VR-144 / Wilmington).